The following is a 594-amino-acid chain: Probable methylenetetrahydrofolate reductase (NADH) (594 aa).

Residue Glu21 is the Proton donor/acceptor of the active site. NAD(+) contacts are provided by residues 21–26 (EYFPPK) and 52–53 (TW). FAD is bound by residues 52 to 53 (TW), His81, 111 to 113 (RGD), Tyr153, 157 to 160 (HPDA), Asp175, and Lys182. A substrate-binding site is contributed by Asp113. Residues Gln193 and Tyr285 each contribute to the substrate site.

Belongs to the methylenetetrahydrofolate reductase family. As to quaternary structure, homodimer. The cofactor is FAD.

It catalyses the reaction (6S)-5-methyl-5,6,7,8-tetrahydrofolate + NAD(+) = (6R)-5,10-methylene-5,6,7,8-tetrahydrofolate + NADH + H(+). It participates in one-carbon metabolism; tetrahydrofolate interconversion. Plant MTHFRs strongly prefer NADH over NADPH. Not inhibited by methionine or S-adenosylmethionine. Functionally, the probable reversibility of the MTHFR reaction in plants suggests that they can metabolize the methyl group of 5,10-methylenetetrahydrofolate to serine, sugars and starch. This chain is Probable methylenetetrahydrofolate reductase (NADH), found in Oryza sativa subsp. japonica (Rice).